The sequence spans 421 residues: Forkhead box protein fkh-3 (421 aa).

A DNA-binding region (fork-head) is located at residues 118–218; sequence RPPISYVALC…SDADFDFFRK (101 aa).

Its subcellular location is the nucleus. Transcription factor. Binds to DNA sequence motif 5'-CTGTTTCA-3'. Regulates expression of a class of small RNAs, known as 21U-RNAs, perhaps acting redundantly with fkh-4 and fkh-5. The protein is Forkhead box protein fkh-3 of Caenorhabditis elegans.